The primary structure comprises 530 residues: Na(+)/H(+) antiporter NhaB (530 aa).

Helical transmembrane passes span 13-33 (FLGKAPDWYKITIISFLIINP), 34-54 (FVFFLVDPFVAGWLLVVEFIF), 64-84 (PLQPGGLLAIEAVAIGMTSPA), 90-110 (LVANIEVLLLLIFMVAGIYFM), 113-133 (LLLYIFTKILIGIRSKVLLSL), 136-156 (CLMAAFLSAFLDALTVIAVVI), 205-225 (LLMHAGIGTALGGVMTMVGEP), 234-254 (AGWLFGEFIIRMSPVTVPVFM), 306-326 (ALIAVWLIVGLAMHLAAVGLI), 351-371 (EEALPFTALLAVFFSIVAVII), 378-400 (PIISWVLTLNGNAQMTMFYIANG), 450-470 (ATPNGQAAFLFVLTSALAPLI), and 481-501 (ALPYTIVLALVGLAGIEFMLL).

Belongs to the NhaB Na(+)/H(+) (TC 2.A.34) antiporter family.

It is found in the cell inner membrane. The catalysed reaction is 2 Na(+)(in) + 3 H(+)(out) = 2 Na(+)(out) + 3 H(+)(in). In terms of biological role, na(+)/H(+) antiporter that extrudes sodium in exchange for external protons. This Photobacterium profundum (strain SS9) protein is Na(+)/H(+) antiporter NhaB.